A 325-amino-acid polypeptide reads, in one-letter code: Transaldolase (325 aa).

Lysine 125 acts as the Schiff-base intermediate with substrate in catalysis.

Belongs to the transaldolase family. Type 2 subfamily.

It localises to the cytoplasm. It carries out the reaction D-sedoheptulose 7-phosphate + D-glyceraldehyde 3-phosphate = D-erythrose 4-phosphate + beta-D-fructose 6-phosphate. The protein operates within carbohydrate degradation; pentose phosphate pathway; D-glyceraldehyde 3-phosphate and beta-D-fructose 6-phosphate from D-ribose 5-phosphate and D-xylulose 5-phosphate (non-oxidative stage): step 2/3. In terms of biological role, transaldolase is important for the balance of metabolites in the pentose-phosphate pathway. The protein is Transaldolase of Campylobacter jejuni subsp. doylei (strain ATCC BAA-1458 / RM4099 / 269.97).